Here is a 103-residue protein sequence, read N- to C-terminus: Small ribosomal subunit protein uS10 (103 aa).

The protein belongs to the universal ribosomal protein uS10 family. As to quaternary structure, part of the 30S ribosomal subunit.

Its function is as follows. Involved in the binding of tRNA to the ribosomes. The protein is Small ribosomal subunit protein uS10 of Korarchaeum cryptofilum (strain OPF8).